Reading from the N-terminus, the 462-residue chain is Trigger factor (462 aa).

The region spanning 161–246 (GDVVVIDFVG…VKEVRAPKAA (86 aa)) is the PPIase FKBP-type domain. Basic and acidic residues predominate over residues 428–437 (SVEDLRKDPD). A disordered region spans residues 428-462 (SVEDLRKDPDEASADGEAAPAKPKKKAAAKKKAAE). Basic residues predominate over residues 449 to 462 (KPKKKAAAKKKAAE).

Belongs to the FKBP-type PPIase family. Tig subfamily.

The protein resides in the cytoplasm. The catalysed reaction is [protein]-peptidylproline (omega=180) = [protein]-peptidylproline (omega=0). Functionally, involved in protein export. Acts as a chaperone by maintaining the newly synthesized protein in an open conformation. Functions as a peptidyl-prolyl cis-trans isomerase. This is Trigger factor from Paramagnetospirillum magneticum (strain ATCC 700264 / AMB-1) (Magnetospirillum magneticum).